Reading from the N-terminus, the 339-residue chain is Ureidoglycine carbamoyltransferase (339 aa).

It belongs to the aspartate/ornithine carbamoyltransferase superfamily. In terms of assembly, homodimer.

It catalyses the reaction (S)-2-ureidoglycine + carbamoyl phosphate = allantoate + phosphate + H(+). Its pathway is purine metabolism. Catalyzes the phosphorolysis of allantoate to ureidoglycine and carbamoyl phosphate. Is likely involved in a purine degradation pathway. In Rubrobacter xylanophilus (strain DSM 9941 / JCM 11954 / NBRC 16129 / PRD-1), this protein is Ureidoglycine carbamoyltransferase.